Reading from the N-terminus, the 287-residue chain is Large ribosomal subunit protein uL2 (287 aa).

Positions 221 to 287 are disordered; it reads RGSVMNPCDH…SKRSRGGRDS (67 aa). Residues 258 to 287 show a composition bias toward basic residues; that stretch reads KTRKRNKPSNRYVLRKRRKTSKRSRGGRDS.

The protein belongs to the universal ribosomal protein uL2 family. In terms of assembly, part of the 50S ribosomal subunit. Forms a bridge to the 30S subunit in the 70S ribosome.

Functionally, one of the primary rRNA binding proteins. Required for association of the 30S and 50S subunits to form the 70S ribosome, for tRNA binding and peptide bond formation. It has been suggested to have peptidyltransferase activity; this is somewhat controversial. Makes several contacts with the 16S rRNA in the 70S ribosome. In Parasynechococcus marenigrum (strain WH8102), this protein is Large ribosomal subunit protein uL2.